A 321-amino-acid polypeptide reads, in one-letter code: Nucleotide-binding protein LI0459 (321 aa).

Residue 41-48 (GMSGAGKS) participates in ATP binding.

The protein belongs to the RapZ-like family.

Displays ATPase and GTPase activities. This chain is Nucleotide-binding protein LI0459, found in Lawsonia intracellularis (strain PHE/MN1-00).